We begin with the raw amino-acid sequence, 111 residues long: Large ribosomal subunit protein P2 (111 aa).

The tract at residues 62-111 is disordered; it reads LASVPSGGAGGAAAAGGAAAAGGAAEAAPEEAKEEEKEESDDDMGFGLFD. The span at 76–88 shows a compositional bias: low complexity; the sequence is AGGAAAAGGAAEA. S101 carries the phosphoserine modification.

It belongs to the eukaryotic ribosomal protein P1/P2 family. As to quaternary structure, P1 and P2 exist as dimers at the large ribosomal subunit.

Functionally, plays an important role in the elongation step of protein synthesis. The sequence is that of Large ribosomal subunit protein P2 from Podospora anserina (Pleurage anserina).